The following is a 339-amino-acid chain: F-box protein At3g22700 (339 aa).

Positions 1–49 constitute an F-box domain; that stretch reads MMSNLPLDLVEEILSRVPATSLKRLRSTCRQWNALLKDRRFTEKHFRKA.

This is F-box protein At3g22700 from Arabidopsis thaliana (Mouse-ear cress).